Consider the following 412-residue polypeptide: G-protein coupled receptor homolog UL33 (412 aa).

The Virion surface segment spans residues Met-1 to Ala-29. N-linked (GlcNAc...) asparagine; by host glycans are attached at residues Asn-7, Asn-18, and Asn-22. Residues Ile-30–Ile-54 form a helical membrane-spanning segment. Residues Thr-55–Ile-70 lie on the Intravirion side of the membrane. A helical membrane pass occupies residues Tyr-71–Trp-95. Residues Leu-96–Ala-102 lie on the Virion surface side of the membrane. A helical transmembrane segment spans residues Ser-103–Arg-129. The cysteines at positions 104 and 188 are disulfide-linked. The Intravirion segment spans residues Tyr-130–Tyr-138. The helical transmembrane segment at Ala-139 to Phe-160 threads the bilayer. The Virion surface portion of the chain corresponds to Ser-161–Ser-203. N-linked (GlcNAc...) asparagine; by host glycosylation is found at Asn-177 and Asn-180. A helical transmembrane segment spans residues Trp-204–Tyr-224. At Ala-225–Ser-240 the chain is on the intravirion side. Residues Arg-241 to Asn-267 form a helical membrane-spanning segment. Residues Ser-268–Leu-281 lie on the Virion surface side of the membrane. The chain crosses the membrane as a helical span at residues Thr-282–Leu-305. The Intravirion segment spans residues Tyr-306–Val-412. The segment at Asn-377 to Val-412 is disordered. A compositionally biased stretch (polar residues) spans Lys-388–Lys-397.

Belongs to the G-protein coupled receptor 1 family. In terms of assembly, heterodimerizes with US28.

It localises to the virion. It is found in the host cell membrane. Its subcellular location is the host cytoplasm. G-protein-coupled receptor (vGPCR) that constitutively activates multiple oncogenic signaling pathways including STAT3, AP-1, phospholipase C, NF-kappa-B or cAMP-responsive element (CRE) pathways. Plays an important role in viral reactivation from latency through activation of host CREB1, facilitating its recruitment to the viral major immediate early (MIE) genes. In turn, expression of the MIE-driven genes such as UL123 are de-repressed. Also facilitates virus dissemination via the extracellular and cell-to-cell route. The polypeptide is G-protein coupled receptor homolog UL33 (UL33) (Human cytomegalovirus (strain AD169) (HHV-5)).